A 457-amino-acid polypeptide reads, in one-letter code: Multidrug resistance protein MdtK (457 aa).

Helical transmembrane passes span 11–31 (LLALAIPVILAQIAQTAMGFV), 53–73 (IWLPAILFGHGLLLALTPVIA), 93–113 (WLAGFVSVLIMLVLWNAGYII), 127–147 (AVGYLRALLWGAPGYLFFQVA), 160–180 (GMVMGFIGLLVNIPVNYIFIY), 189–209 (GGVGCGVATAAVYWVMFLAMV), 243–263 (LPIALALFFEVTLFAVVALLV), 276–296 (IALNFSSLMFVLPMSLAAAVT), 314–334 (AARTGLMVGVCMATLTAIFTV), 350–370 (VVTLAAHLMLLAAVYQISDSI), 387–407 (IFYITFTAYWVLGLPSGYILA), and 418–438 (PAGFWIGFIIGLTSAAIMMML).

This sequence belongs to the multi antimicrobial extrusion (MATE) (TC 2.A.66.1) family. MdtK subfamily.

It localises to the cell inner membrane. In terms of biological role, multidrug efflux pump that functions probably as a Na(+)/drug antiporter. The chain is Multidrug resistance protein MdtK from Escherichia coli O139:H28 (strain E24377A / ETEC).